Here is a 713-residue protein sequence, read N- to C-terminus: Calpain-1 catalytic subunit (713 aa).

The Calpain catalytic domain occupies 55 to 354; it reads LFQDDAFPPV…FTKLEICNLT (300 aa). Catalysis depends on residues C115, H272, and N296. A Phosphothreonine modification is found at T354. Residues 355 to 525 form a domain III region; it reads PDALKSRTLR…KKAGTQELDD (171 aa). The segment at 526-541 is linker; it reads QIQANLPDEKVLSEEE. A domain IV region spans residues 542–712; it reads IDDNFKTLFS…LFKWLQLTMF (171 aa). EF-hand domains follow at residues 557–575, 584–609, 614–649, and 679–713; these read DMEISVKELQTILNRIISK, FSLESCRSMVNLMDRDGNGKLGLVEF, NRIRNYLTIFRKFDLDKSGSMSAYEMRMAIEAAGFK, and VRLETMFRFFKILDTDLDGVVTFDLFKWLQLTMFA. Residues D597, D599, N601, K603, E608, D627, D629, S631, S633, and E638 each coordinate Ca(2+).

It belongs to the peptidase C2 family. In terms of assembly, forms a heterodimer with a small (regulatory) subunit CAPNS1. Requires Ca(2+) as cofactor. In terms of processing, undergoes calcium-induced successive autoproteolytic cleavages that generate a membrane-bound 78 kDa active form and an intracellular 75 kDa active form. Calpastatin reduces with high efficiency the transition from 78 kDa to 75 kDa calpain forms.

It is found in the cytoplasm. Its subcellular location is the cell membrane. It catalyses the reaction Broad endopeptidase specificity.. Its activity is regulated as follows. Activated by micromolar concentrations of calcium and inhibited by calpastatin. Its function is as follows. Calcium-regulated non-lysosomal thiol-protease which catalyzes limited proteolysis of substrates involved in cytoskeletal remodeling and signal transduction. Proteolytically cleaves CTBP1 at 'Asn-364', 'Gly-377' and 'His-399'. Cleaves and activates caspase-7 (CASP7). This chain is Calpain-1 catalytic subunit, found in Rattus norvegicus (Rat).